The primary structure comprises 739 residues: Poly(A) polymerase alpha (739 aa).

Residues 1–17 (MPFPVTTQGSQQTQPPQ) show a composition bias toward low complexity. The interval 1–22 (MPFPVTTQGSQQTQPPQRHYGI) is disordered. A phosphoserine mark is found at S10 and S24. ATP contacts are provided by residues 100-102 (FGS), T109, 113-115 (DID), D167, K228, Y237, and 246-247 (GV). Residues D113, D115, and D167 each contribute to the Mg(2+) site. Residues K444, K445, K506, and K507 each participate in a glycyl lysine isopeptide (Lys-Gly) (interchain with G-Cter in SUMO) cross-link. The Nuclear localization signal 1 motif lies at 490-507 (RKQLHQLLPSHVLQKRKK). Positions 508–643 (HSTEGVKLTA…TKVPNPIVGV (136 aa)) are ser/Thr-rich. Positions 523–534 (LDLSMDSDNSMS) are enriched in low complexity. The interval 523–725 (LDLSMDSDNS…SDIPALPANP (203 aa)) is disordered. Residues 535–557 (VPSPTSAMKTSPLNSSGSSQGRN) are compositionally biased toward polar residues. S537 is subject to Phosphoserine; by MAPK. Phosphoserine is present on S558. Residues 566-582 (ASVTSIQASEVSVPQAN) are compositionally biased toward polar residues. Composition is skewed to low complexity over residues 583–594 (SSESPGGPSSES) and 611–622 (TVSRVVSSTRLV). An N6-acetyllysine mark is found at K635 and K644. The Nuclear localization signal 2 signature appears at 644 to 659 (KRTSSPNKEESPKKTK). Basic and acidic residues-rich tracts occupy residues 650-660 (NKEESPKKTKT) and 676-686 (GHDKTETKEQV). A required for interaction with NUDT21 region spans residues 671-739 (CLALSGHDKT…KNSIKLRLNR (69 aa)). Positions 691–715 (SAVQSETVPASASLLASQKTSSTDL) are enriched in polar residues. At K730 the chain carries N6-acetyllysine; alternate. K730 is covalently cross-linked (Glycyl lysine isopeptide (Lys-Gly) (interchain with G-Cter in SUMO); alternate). The residue at position 732 (S732) is a Phosphoserine. At K734 the chain carries N6-acetyllysine; alternate. K734 is covalently cross-linked (Glycyl lysine isopeptide (Lys-Gly) (interchain with G-Cter in SUMO); alternate).

Belongs to the poly(A) polymerase family. As to quaternary structure, monomer. Found in a complex with CPSF1, FIP1L1 and PAPOLA. Interacts with AHCYL1 and FIP1L1; the interaction with AHCYL1 seems to increase interaction with FIP1L1. Interacts with NUDT21; the interaction is diminished by acetylation. Interacts with KPNB1; the interaction promotes PAP nuclear import and is inhibited by acetylation of PAP. Mg(2+) serves as cofactor. Requires Mn(2+) as cofactor. Post-translationally, polysumoylated. Varying sumoylation depending on tissue- and cell-type. Highly sumoylated in bladder and NIH 3T3 cells. Sumoylation is required for nuclear localization and enhances PAP stability. Desumoylated by SENP1. Inhibits polymerase activity. Hyperphosphorylation on multiple CDK2 consensus and non-consensus sites in the C-terminal Ser/Thr-rich region represses PAP activity in late M-phase. Phosphorylation/dephosphorylation may regulate the interaction between PAP and CPSF. In terms of processing, acetylated in the C-terminus. Acetylation decreases interaction with NUDT21 and KPNB1, and inhibits nuclear localization through inhibiting binding to the importin alpha/beta complex. In terms of tissue distribution, expressed in brain, thymus, lung, kidney, bladder, testis and spleen.

It localises to the nucleus. The enzyme catalyses RNA(n) + ATP = RNA(n)-3'-adenine ribonucleotide + diphosphate. Its function is as follows. Polymerase that creates the 3'-poly(A) tail of mRNA's. Also required for the endoribonucleolytic cleavage reaction at some polyadenylation sites. May acquire specificity through interaction with a cleavage and polyadenylation specificity factor (CPSF) at its C-terminus. The chain is Poly(A) polymerase alpha (Papola) from Mus musculus (Mouse).